We begin with the raw amino-acid sequence, 355 residues long: Biotin synthase (355 aa).

Residues 51-275 (NTVKVNYLVN…VCPDKEIRIA (225 aa)) form the Radical SAM core domain. [4Fe-4S] cluster contacts are provided by C66, C70, and C73. [2Fe-2S] cluster contacts are provided by C110, C143, C203, and R273.

It belongs to the radical SAM superfamily. Biotin synthase family. As to quaternary structure, homodimer. Requires [4Fe-4S] cluster as cofactor. The cofactor is [2Fe-2S] cluster.

The catalysed reaction is (4R,5S)-dethiobiotin + (sulfur carrier)-SH + 2 reduced [2Fe-2S]-[ferredoxin] + 2 S-adenosyl-L-methionine = (sulfur carrier)-H + biotin + 2 5'-deoxyadenosine + 2 L-methionine + 2 oxidized [2Fe-2S]-[ferredoxin]. It participates in cofactor biosynthesis; biotin biosynthesis; biotin from 7,8-diaminononanoate: step 2/2. Catalyzes the conversion of dethiobiotin (DTB) to biotin by the insertion of a sulfur atom into dethiobiotin via a radical-based mechanism. In Saccharopolyspora erythraea (strain ATCC 11635 / DSM 40517 / JCM 4748 / NBRC 13426 / NCIMB 8594 / NRRL 2338), this protein is Biotin synthase.